A 187-amino-acid polypeptide reads, in one-letter code: Crossover junction endodeoxyribonuclease RuvC (187 aa).

Residues aspartate 7, glutamate 67, and aspartate 140 contribute to the active site. Residues aspartate 7, glutamate 67, and aspartate 140 each coordinate Mg(2+).

Belongs to the RuvC family. Homodimer which binds Holliday junction (HJ) DNA. The HJ becomes 2-fold symmetrical on binding to RuvC with unstacked arms; it has a different conformation from HJ DNA in complex with RuvA. In the full resolvosome a probable DNA-RuvA(4)-RuvB(12)-RuvC(2) complex forms which resolves the HJ. Mg(2+) serves as cofactor.

Its subcellular location is the cytoplasm. It carries out the reaction Endonucleolytic cleavage at a junction such as a reciprocal single-stranded crossover between two homologous DNA duplexes (Holliday junction).. Functionally, the RuvA-RuvB-RuvC complex processes Holliday junction (HJ) DNA during genetic recombination and DNA repair. Endonuclease that resolves HJ intermediates. Cleaves cruciform DNA by making single-stranded nicks across the HJ at symmetrical positions within the homologous arms, yielding a 5'-phosphate and a 3'-hydroxyl group; requires a central core of homology in the junction. The consensus cleavage sequence is 5'-(A/T)TT(C/G)-3'. Cleavage occurs on the 3'-side of the TT dinucleotide at the point of strand exchange. HJ branch migration catalyzed by RuvA-RuvB allows RuvC to scan DNA until it finds its consensus sequence, where it cleaves and resolves the cruciform DNA. This is Crossover junction endodeoxyribonuclease RuvC from Chlorobaculum parvum (strain DSM 263 / NCIMB 8327) (Chlorobium vibrioforme subsp. thiosulfatophilum).